A 258-amino-acid polypeptide reads, in one-letter code: MLAKRIIPCLDVRDGQVVKGVQFRNHEIIGDIVPLAKRYAEEGADELVFYDITASSDGRVVDKSWVSRVAEVIDIPFCVAGGIKSLEDAAKILSFGADKISINSPALADPTLITRLADRFGVQCIVVGIDTWYDAETGKYHVNQYTGDESRTRVTQWETLDWVEEVQKRGAGEIVLNMMNQDGVRNGYDLDQLKKVREVCHVPLIASGGAGTMEHFLEAFRDADVDGALAASVFHKQIINISELKAYLASQGVEIRIC.

Residues Asp-11 and Asp-130 contribute to the active site.

It belongs to the HisA/HisF family. Heterodimer of HisH and HisF.

The protein resides in the cytoplasm. The enzyme catalyses 5-[(5-phospho-1-deoxy-D-ribulos-1-ylimino)methylamino]-1-(5-phospho-beta-D-ribosyl)imidazole-4-carboxamide + L-glutamine = D-erythro-1-(imidazol-4-yl)glycerol 3-phosphate + 5-amino-1-(5-phospho-beta-D-ribosyl)imidazole-4-carboxamide + L-glutamate + H(+). It functions in the pathway amino-acid biosynthesis; L-histidine biosynthesis; L-histidine from 5-phospho-alpha-D-ribose 1-diphosphate: step 5/9. In terms of biological role, IGPS catalyzes the conversion of PRFAR and glutamine to IGP, AICAR and glutamate. The HisF subunit catalyzes the cyclization activity that produces IGP and AICAR from PRFAR using the ammonia provided by the HisH subunit. In Escherichia coli O17:K52:H18 (strain UMN026 / ExPEC), this protein is Imidazole glycerol phosphate synthase subunit HisF.